The chain runs to 334 residues: Dual specificity mitogen-activated protein kinase kinase 6 (334 aa).

Over residues 1–11 the composition is skewed to basic residues; that stretch reads MSQSKGKKRNP. The segment at 1-34 is disordered; it reads MSQSKGKKRNPGLKIPKEAFEQPQTSSTPPRDLD. The segment at 4-19 is d domain; sequence SKGKKRNPGLKIPKEA. In terms of domain architecture, Protein kinase spans 53 to 314; it reads LEPIVELGRG…YPELMQHPFF (262 aa). ATP is bound by residues 59–67 and lysine 82; that span reads LGRGAYGVV. Aspartate 179 serves as the catalytic Proton acceptor. At serine 207 the chain carries Phosphoserine; by MAPK3. Phosphothreonine; by MAPK3 is present on threonine 211. The tract at residues 311–334 is DVD domain; the sequence is HPFFTLHESKATDVASFVKSILGD.

The protein belongs to the protein kinase superfamily. STE Ser/Thr protein kinase family. MAP kinase kinase subfamily. In terms of assembly, dimer. Interacts (via its D domain) with its substrates MAPK11, MAPK12, MAPK13 and MAPK14. Interacts (via its DVD domain) with MAP3Ks activators like MAP3K5/ASK1, MAP3K1/MEKK1, MAP3K2/MEKK2, MAP3K3/MEKK3, MAP3K4/MEKK4, MAP3K7/TAK1, MAP3K11/MLK3 and MAP3K17/TAOK2. Interacts with DCTN1. Interacts with EIF2AK2/PKR. Weakly autophosphorylated. Phosphorylated at Ser-207 and Thr-211 by the majority of M3Ks, such as MAP3K5/ASK1, MAP3K1/MEKK1, MAP3K2/MEKK2, MAP3K3/MEKK3, MAP3K4/MEKK4, MAP3K7/TAK1, MAP3K11/MLK3 and MAP3K17/TAOK2. Post-translationally, in response to genotoxic stress, MAP3K-phosphorylated MAP2K6 is ubiquitinated and degraded by the SCF(FBXO31) complex.

It is found in the nucleus. Its subcellular location is the cytoplasm. The protein resides in the cytoskeleton. It catalyses the reaction L-seryl-[protein] + ATP = O-phospho-L-seryl-[protein] + ADP + H(+). The enzyme catalyses L-threonyl-[protein] + ATP = O-phospho-L-threonyl-[protein] + ADP + H(+). The catalysed reaction is L-tyrosyl-[protein] + ATP = O-phospho-L-tyrosyl-[protein] + ADP + H(+). Activated by dual phosphorylation on Ser-207 and Thr-211 in response to a variety of cellular stresses, including UV radiation, osmotic shock, hypoxia, inflammatory cytokines, interferon gamma (IFNG), and less often by growth factors. MAP2K6/MKK6 is activated by the majority of M3Ks, such as MAP3K5/ASK1, MAP3K1/MEKK1, MAP3K2/MEKK2, MAP3K3/MEKK3, MAP3K4/MEKK4, MAP3K7/TAK1, MAP3K11/MLK3 and MAP3K17/TAOK2. In terms of biological role, dual specificity protein kinase which acts as an essential component of the MAP kinase signal transduction pathway. With MAP3K3/MKK3, catalyzes the concomitant phosphorylation of a threonine and a tyrosine residue in the MAP kinases p38 MAPK11, MAPK12, MAPK13 and MAPK14 and plays an important role in the regulation of cellular responses to cytokines and all kinds of stresses. Especially, MAP2K3/MKK3 and MAP2K6/MKK6 are both essential for the activation of MAPK11 and MAPK13 induced by environmental stress, whereas MAP2K6/MKK6 is the major MAPK11 activator in response to TNF. MAP2K6/MKK6 also phosphorylates and activates PAK6. The p38 MAP kinase signal transduction pathway leads to direct activation of transcription factors. Nuclear targets of p38 MAP kinase include the transcription factors ATF2 and ELK1. Within the p38 MAPK signal transduction pathway, MAP3K6/MKK6 mediates phosphorylation of STAT4 through MAPK14 activation, and is therefore required for STAT4 activation and STAT4-regulated gene expression in response to IL-12 stimulation. The pathway is also crucial for IL-6-induced SOCS3 expression and down-regulation of IL-6-mediated gene induction; and for IFNG-dependent gene transcription. Has a role in osteoclast differentiation through NF-kappa-B transactivation by TNFSF11, and in endochondral ossification and since SOX9 is another likely downstream target of the p38 MAPK pathway. MAP2K6/MKK6 mediates apoptotic cell death in thymocytes. Acts also as a regulator for melanocytes dendricity, through the modulation of Rho family GTPases. The polypeptide is Dual specificity mitogen-activated protein kinase kinase 6 (MAP2K6) (Bos taurus (Bovine)).